The chain runs to 479 residues: Ribosomal RNA small subunit methyltransferase F (479 aa).

S-adenosyl-L-methionine-binding positions include 125-131, Glu149, Asp176, and Asp194; that span reads AAAPGSK. Residue Cys247 is the Nucleophile of the active site.

This sequence belongs to the class I-like SAM-binding methyltransferase superfamily. RsmB/NOP family.

The protein resides in the cytoplasm. The catalysed reaction is cytidine(1407) in 16S rRNA + S-adenosyl-L-methionine = 5-methylcytidine(1407) in 16S rRNA + S-adenosyl-L-homocysteine + H(+). Functionally, specifically methylates the cytosine at position 1407 (m5C1407) of 16S rRNA. The protein is Ribosomal RNA small subunit methyltransferase F of Salmonella typhi.